The following is a 438-amino-acid chain: Xanthine permease (438 aa).

13 consecutive transmembrane segments (helical) span residues 11–31, 41–61, 65–85, 100–120, 121–141, 154–174, 180–200, 220–240, 272–292, 308–328, 331–351, 367–387, and 396–416; these read LGIQ…LIVG, LTYL…LQVW, FFGI…SPMI, IIAS…LVSF, FPPV…MPVA, FGDL…VLLY, FIKS…AYFM, FYFG…IVAI, AEGL…TAFS, VIVV…IAAF, IIPS…VIAY, LLIV…PDIF, and LLTT…NIVY.

It belongs to the nucleobase:cation symporter-2 (NCS2) (TC 2.A.40) family.

It localises to the cell membrane. In terms of biological role, transport of xanthine in the cell. This is Xanthine permease (pbuX) from Bacillus subtilis (strain 168).